The chain runs to 135 residues: MARTKQTARKSTGGKAPRKQLATKAARKTPATGGVKKPHRYRPGTVALREIRKYQKSTELVIRKLPFQRLVREIAQDFKTDLRFQSQAVLALQEAAEAYLVGLFEDTNLCAIHAKRVTIMPKDIQLARRIRGERA.

Positions 1–40 (MARTKQTARKSTGGKAPRKQLATKAARKTPATGGVKKPHR) are disordered. An N6-methyllysine modification is found at Lys-5. Lys-10 carries the N6-acetyllysine; alternate modification. Position 10 is an N6-methyllysine; alternate (Lys-10). A Phosphoserine modification is found at Ser-11. Position 12 is a phosphothreonine (Thr-12). Residues Lys-15, Lys-19, and Lys-24 each carry the N6-acetyllysine modification. Lys-28 is subject to N6-acetyllysine; alternate. Lys-28 is modified (N6-methyllysine; alternate). N6-methyllysine occurs at positions 36 and 37.

Belongs to the histone H3 family. As to quaternary structure, the nucleosome is a histone octamer containing two molecules each of H2A, H2B, H3 and H4 assembled in one H3-H4 heterotetramer and two H2A-H2B heterodimers. The octamer wraps approximately 147 bp of DNA. Post-translationally, acetylation is generally linked to gene activation. Acetylated to form H3K9ac (11%), H3K14ac (17%), H3K18ac (11%), H3K23ac (16%) and H3K27ac (7%). H3K4, H3K35 and H3K36 are not acetylated. H3K4me prevents acetylation. 32% of the histone H3 are acetylated with, on average, 2.4 acetyl-Lys. They are all continuously deacatylated and re-acetylated with a half-life of approximately 2 minutes. Monomethylated to form H3K4me1 (81%), H3K9me1 (16%), H3K27me1 (25%), H3K35me1 (25%) and H3K36me1 (5%). No methylation at H3K14, H3K18 and H3K23. Methylated by a protein complex that includes Mut11. Set1 methylates specifically H3K4. H3K4me1 is associated with silenced euchromatin. Set3 forms H3K9me1, while H3K9me2 is undetected. H3K9me1 is specifically associated with silent, multi-copy transgenes. In terms of processing, no phosphorylation detected.

It is found in the nucleus. Its subcellular location is the chromosome. Its function is as follows. Core component of nucleosome. Nucleosomes wrap and compact DNA into chromatin, limiting DNA accessibility to the cellular machineries which require DNA as a template. Histones thereby play a central role in transcription regulation, DNA repair, DNA replication and chromosomal stability. DNA accessibility is regulated via a complex set of post-translational modifications of histones, also called histone code, and nucleosome remodeling. The chain is Histone H3 type 1 (ch3-I) from Chlamydomonas reinhardtii (Chlamydomonas smithii).